We begin with the raw amino-acid sequence, 302 residues long: Nucleotide-binding protein Rsph17029_0317 (302 aa).

Residue 15-22 (GPSGAGRT) participates in ATP binding. 62 to 65 (DVRN) contributes to the GTP binding site.

Belongs to the RapZ-like family.

Displays ATPase and GTPase activities. In Cereibacter sphaeroides (strain ATCC 17029 / ATH 2.4.9) (Rhodobacter sphaeroides), this protein is Nucleotide-binding protein Rsph17029_0317.